The following is a 201-amino-acid chain: MTTTVGIAVREGVVLATDKRVTAGYYIAHKQGEKIWKIDDHVAATMSGGVADLQSVLSFLTLRAREYKMEYKRPIPIRALVNYVSLILFYSRPYIYIVHSIIGGVDDEEGAVLYMADWLGTVTKERYIATGSGSPYAKGALEVGYREDMSLEDAVDLAIKAVKAAIRNDPGSGEGIDVVVITKREGFRRVFTAQQKIVLAE.

A propeptide (removed in mature form; by autocatalysis) is located at residue methionine 1. Threonine 2 acts as the Nucleophile in catalysis.

It belongs to the peptidase T1B family. The 20S proteasome core is composed of 14 alpha and 14 beta subunits that assemble into four stacked heptameric rings, resulting in a barrel-shaped structure. The two inner rings, each composed of seven catalytic beta subunits, are sandwiched by two outer rings, each composed of seven alpha subunits. The catalytic chamber with the active sites is on the inside of the barrel. Has a gated structure, the ends of the cylinder being occluded by the N-termini of the alpha-subunits. Is capped at one or both ends by the proteasome regulatory ATPase, PAN.

Its subcellular location is the cytoplasm. The enzyme catalyses Cleavage of peptide bonds with very broad specificity.. Its activity is regulated as follows. The formation of the proteasomal ATPase PAN-20S proteasome complex, via the docking of the C-termini of PAN into the intersubunit pockets in the alpha-rings, triggers opening of the gate for substrate entry. Interconversion between the open-gate and close-gate conformations leads to a dynamic regulation of the 20S proteasome proteolysis activity. Component of the proteasome core, a large protease complex with broad specificity involved in protein degradation. This Pyrobaculum neutrophilum (strain DSM 2338 / JCM 9278 / NBRC 100436 / V24Sta) (Thermoproteus neutrophilus) protein is Proteasome subunit beta 1.